The sequence spans 231 residues: Enolase-phosphatase E1 (231 aa).

This sequence belongs to the HAD-like hydrolase superfamily. MasA/MtnC family. In terms of assembly, monomer. Mg(2+) is required as a cofactor.

It carries out the reaction 5-methylsulfanyl-2,3-dioxopentyl phosphate + H2O = 1,2-dihydroxy-5-(methylsulfanyl)pent-1-en-3-one + phosphate. It participates in amino-acid biosynthesis; L-methionine biosynthesis via salvage pathway; L-methionine from S-methyl-5-thio-alpha-D-ribose 1-phosphate: step 3/6. The protein operates within amino-acid biosynthesis; L-methionine biosynthesis via salvage pathway; L-methionine from S-methyl-5-thio-alpha-D-ribose 1-phosphate: step 4/6. In terms of biological role, bifunctional enzyme that catalyzes the enolization of 2,3-diketo-5-methylthiopentyl-1-phosphate (DK-MTP-1-P) into the intermediate 2-hydroxy-3-keto-5-methylthiopentenyl-1-phosphate (HK-MTPenyl-1-P), which is then dephosphorylated to form the acireductone 1,2-dihydroxy-3-keto-5-methylthiopentene (DHK-MTPene). This is Enolase-phosphatase E1 from Granulibacter bethesdensis (strain ATCC BAA-1260 / CGDNIH1).